We begin with the raw amino-acid sequence, 467 residues long: Sexual differentiation process putative subtilase-type proteinase isp6 (467 aa).

In terms of domain architecture, Inhibitor I9 spans 86–176; the sequence is YIIVLQPDLS…AVERDQVVSI (91 aa). Residues 186-467 enclose the Peptidase S8 domain; sequence PWGLARISHK…NLLAFNGAQE (282 aa). Catalysis depends on charge relay system residues Asp221, His253, and Ser409.

Belongs to the peptidase S8 family.

This is Sexual differentiation process putative subtilase-type proteinase isp6 (isp6) from Schizosaccharomyces pombe (strain 972 / ATCC 24843) (Fission yeast).